Here is a 216-residue protein sequence, read N- to C-terminus: Protein fmp32, mitochondrial (216 aa).

The stretch at 111–133 forms a coiled coil; the sequence is RQEMVALHSQVEQLFSDVERLKT. The helical transmembrane segment at 193–215 threads the bilayer; that stretch reads TLQWVFGIVTGSGALLLAYVRLI.

This sequence belongs to the CCDC90 family.

The protein localises to the mitochondrion. Its subcellular location is the membrane. This Schizosaccharomyces pombe (strain 972 / ATCC 24843) (Fission yeast) protein is Protein fmp32, mitochondrial (fmp32).